The chain runs to 110 residues: MKFVLLFGVFLVTLFSYSSAEMLDDFDQADEDELLSLIEKEEARKDCIPKHHECTNNKHGCCRGHLFKYKCQCTTVVTQSGEETERCFCGTPPHHKAAELVVGFGKKIFG.

The first 20 residues, 1–20, serve as a signal peptide directing secretion; that stretch reads MKFVLLFGVFLVTLFSYSSA. Positions 21–44 are excised as a propeptide; sequence EMLDDFDQADEDELLSLIEKEEAR. Intrachain disulfides connect Cys-47/Cys-62, Cys-54/Cys-71, Cys-61/Cys-89, and Cys-73/Cys-87.

This sequence belongs to the neurotoxin 19 (CSTX) family. 03 subfamily. As to expression, expressed by the venom gland.

The protein localises to the secreted. This is U1-lycotoxin-Ls1kk from Lycosa singoriensis (Wolf spider).